The following is a 352-amino-acid chain: UDP-N-acetylglucosamine--N-acetylmuramyl-(pentapeptide) pyrophosphoryl-undecaprenol N-acetylglucosamine transferase (352 aa).

Residues Thr-13–Gly-15, Asn-125, Arg-161, Ser-189, Ile-242, Ala-261–Glu-266, and Gln-286 each bind UDP-N-acetyl-alpha-D-glucosamine.

It belongs to the glycosyltransferase 28 family. MurG subfamily.

Its subcellular location is the cell inner membrane. It catalyses the reaction di-trans,octa-cis-undecaprenyl diphospho-N-acetyl-alpha-D-muramoyl-L-alanyl-D-glutamyl-meso-2,6-diaminopimeloyl-D-alanyl-D-alanine + UDP-N-acetyl-alpha-D-glucosamine = di-trans,octa-cis-undecaprenyl diphospho-[N-acetyl-alpha-D-glucosaminyl-(1-&gt;4)]-N-acetyl-alpha-D-muramoyl-L-alanyl-D-glutamyl-meso-2,6-diaminopimeloyl-D-alanyl-D-alanine + UDP + H(+). The protein operates within cell wall biogenesis; peptidoglycan biosynthesis. Its function is as follows. Cell wall formation. Catalyzes the transfer of a GlcNAc subunit on undecaprenyl-pyrophosphoryl-MurNAc-pentapeptide (lipid intermediate I) to form undecaprenyl-pyrophosphoryl-MurNAc-(pentapeptide)GlcNAc (lipid intermediate II). The protein is UDP-N-acetylglucosamine--N-acetylmuramyl-(pentapeptide) pyrophosphoryl-undecaprenol N-acetylglucosamine transferase of Erwinia tasmaniensis (strain DSM 17950 / CFBP 7177 / CIP 109463 / NCPPB 4357 / Et1/99).